The chain runs to 1584 residues: MSQDTDVVSVPILGKEAVFVGFNLERRVCDFLIENAKSSAYVIVTDTNIAPHYLEKYTTALSEAAKRHGVAPRILTRVIPPGETSKCRSMKAEIEDWMLSQSCTRDTVLVAMGGGVIGDMAGYVAATFMRGIRFIQLPTTLLAMVDSSIGGKTAIDTPNGKNLVGAFWQPLAVFADLNFLETLEPRQFINGMGEVIKTAAMWNEKDFCLLEQNPTVILEAVHRPRVPGQFKFENIRNLLQKIILASVRTKCEVVTLDEREGGLRNLLNFGHSIGHAYEAILFPQILHGECVSIGMVKELELSRYLGILKPNAVGRVTKCLMSYTLPVSVHDAHIKKYAGYKKCPVDKLIRIMAVDKKNQGLQKRVVILKAVGETYEKHATVVSDEDIRVVLSHDIQVSPFDNSVSDVVVTPPGSKSISNRALILAAMAKGTTKLTNMLHSDDTQVMMAALEELGAATFSWEDNGETLVVNGGGKFKTPSKELYLSNAGTAARFLTTVAALVGENEQGGEVVLTGNHRMKVRPIGPLVDALRANGCSISYLEREGSLPLKMIPQNGLRGGVIELAATVSSQYVSSILMCAPYAQEPVTLKLVGGKPISQLYVDMTIAMMKGFGVNVVKSETEAYTYHIPKANYTSPGDYEIESDASSATYPLAFAAITGTKCTVPNIGSASLQGDARFARDVLAPMGCTVEQTPTSTTVQGPPMGQLKPLESVDMETMTDAFLTATALAAVACNSSGNEHITRITGIANQRVKECNRIAAMVHELAKFGVKAGELEDGIFIHGQSYKDLKTPEEGIYTYDDHRVAMAFSILTLVTPKPTVILDKACVVKTWPYWWDVLRNSFKIKLAGVESKETVKSVKLTRSRASVILIGMRGAGKTTIGSIIAGQLNMKFLDLDQELEKKLNTTIPDLVNTRGWDDFRQEELQVLQEFIDTKSSDFVAACGGGIVETPAARELLCKYVKEGGIVLHIHRNLDQVLSYLSIDKSRPAYADRESTKNVYLRRHQWYLDCRSHDFVSPTIESGNVQSKLETSMSRFLRVVTGKSTWFEKAIQKPHSFFLSLTFPNINDAISFLPEAIIGCDAVELRADLLEDPNSTTGYPSVEFVAEQFATLRAAIDLPIIFTVRSKDQGGRFPNANESEAVELMLAALRWGVDVLDLELGWSTESLQAIYARKENTKIITSWHDTAQRCSWAQPDEWLQKLDMATAFGDVVKFVGIAKSMQDNFDLEKFRKSFKGYTNKPLIAINMGTVGQLSRVFNNVLTPVTSPALPYKAAPGQLSVRQIITALSLMGSISPKKFYLFGTPIQHSKSPILHKTCYDLTGLPYTYDLFETESVEGVKDVLSQPDFGGANVTIPYKLDILQYLDELSDEARFLGAVNTVVPISENGKRKLRGDNTDWRGIVRTFVRAGANNLNGKNALVIGAGGTSRAAIFAMHKLGAKNIYLLNRTLVNAEKVKAVFPEEYNVKVIDHTKQSEISEWTKLQVAAVVSTVPADRPLPESVSKVIDALLSEIPAQKKEQYVFLDMAYKPLNTPLMSVASKHGYTCINGLEVLLQQGLASFEIWTGLAVPFEHVFGLYMVLCAKEHN.

The 3-dehydroquinate synthase stretch occupies residues 1–384 (MSQDTDVVSV…YEKHATVVSD (384 aa)). Residues 46-48 (DTN), 83-86 (ETSK), 114-116 (GGV), and Asp-119 contribute to the NAD(+) site. Arg-130 serves as a coordination point for 7-phospho-2-dehydro-3-deoxy-D-arabino-heptonate. Residue 139 to 140 (TT) coordinates NAD(+). 7-phospho-2-dehydro-3-deoxy-D-arabino-heptonate contacts are provided by Asp-146 and Lys-152. Position 161 (Lys-161) interacts with NAD(+). Asn-162 serves as a coordination point for 7-phospho-2-dehydro-3-deoxy-D-arabino-heptonate. NAD(+) contacts are provided by residues 179-182 (FLET) and Asn-190. Glu-194 lines the Zn(2+) pocket. 7-phospho-2-dehydro-3-deoxy-D-arabino-heptonate is bound by residues 194-197 (EVIK) and Lys-250. Residue Glu-260 is the Proton acceptor; for 3-dehydroquinate synthase activity of the active site. Residues 264–268 (RNLLN) and His-271 each bind 7-phospho-2-dehydro-3-deoxy-D-arabino-heptonate. Zn(2+) is bound at residue His-271. The active-site Proton acceptor; for 3-dehydroquinate synthase activity is His-275. 7-phospho-2-dehydro-3-deoxy-D-arabino-heptonate contacts are provided by His-287 and Lys-356. His-287 contacts Zn(2+). Residues 397–843 (VSPFDNSVSD…WDVLRNSFKI (447 aa)) are EPSP synthase. Cys-825 acts as the For EPSP synthase activity in catalysis. A shikimate kinase region spans residues 863-1058 (RASVILIGMR…IQKPHSFFLS (196 aa)). 870-877 (GMRGAGKT) serves as a coordination point for ATP. The interval 1059-1280 (LTFPNINDAI…AAPGQLSVRQ (222 aa)) is 3-dehydroquinase. The active-site Proton acceptor; for 3-dehydroquinate dehydratase activity is the His-1182. Lys-1211 serves as the catalytic Schiff-base intermediate with substrate; for 3-dehydroquinate dehydratase activity. A shikimate dehydrogenase region spans residues 1293–1584 (PKKFYLFGTP…YMVLCAKEHN (292 aa)).

In the N-terminal section; belongs to the sugar phosphate cyclases superfamily. Dehydroquinate synthase family. The protein in the 2nd section; belongs to the EPSP synthase family. It in the 3rd section; belongs to the shikimate kinase family. This sequence in the 4th section; belongs to the type-I 3-dehydroquinase family. In the C-terminal section; belongs to the shikimate dehydrogenase family. As to quaternary structure, homodimer. Requires Zn(2+) as cofactor.

The protein resides in the cytoplasm. It carries out the reaction 7-phospho-2-dehydro-3-deoxy-D-arabino-heptonate = 3-dehydroquinate + phosphate. The enzyme catalyses 3-dehydroquinate = 3-dehydroshikimate + H2O. The catalysed reaction is shikimate + NADP(+) = 3-dehydroshikimate + NADPH + H(+). It catalyses the reaction shikimate + ATP = 3-phosphoshikimate + ADP + H(+). It carries out the reaction 3-phosphoshikimate + phosphoenolpyruvate = 5-O-(1-carboxyvinyl)-3-phosphoshikimate + phosphate. It participates in metabolic intermediate biosynthesis; chorismate biosynthesis; chorismate from D-erythrose 4-phosphate and phosphoenolpyruvate: step 2/7. The protein operates within metabolic intermediate biosynthesis; chorismate biosynthesis; chorismate from D-erythrose 4-phosphate and phosphoenolpyruvate: step 3/7. Its pathway is metabolic intermediate biosynthesis; chorismate biosynthesis; chorismate from D-erythrose 4-phosphate and phosphoenolpyruvate: step 4/7. It functions in the pathway metabolic intermediate biosynthesis; chorismate biosynthesis; chorismate from D-erythrose 4-phosphate and phosphoenolpyruvate: step 5/7. It participates in metabolic intermediate biosynthesis; chorismate biosynthesis; chorismate from D-erythrose 4-phosphate and phosphoenolpyruvate: step 6/7. In terms of biological role, the AROM polypeptide catalyzes 5 consecutive enzymatic reactions in prechorismate polyaromatic amino acid biosynthesis. This Schizosaccharomyces japonicus (strain yFS275 / FY16936) (Fission yeast) protein is Pentafunctional AROM polypeptide.